The following is a 105-amino-acid chain: Small ribosomal subunit protein uS10 (105 aa).

The protein belongs to the universal ribosomal protein uS10 family. Part of the 30S ribosomal subunit.

Involved in the binding of tRNA to the ribosomes. The chain is Small ribosomal subunit protein uS10 from Cyanothece sp. (strain PCC 7425 / ATCC 29141).